Reading from the N-terminus, the 526-residue chain is 3-hydroxy-3-methylglutaryl-coenzyme A reductase 2 (526 aa).

Active-site charge relay system residues include Glu-193, Lys-325, and Asp-401. His-499 acts as the Proton donor in catalysis. The segment at Asn-503 to Asp-526 is disordered. Positions Asp-514–Asp-526 are enriched in polar residues.

This sequence belongs to the HMG-CoA reductase family.

The catalysed reaction is (R)-mevalonate + 2 NADP(+) + CoA = (3S)-3-hydroxy-3-methylglutaryl-CoA + 2 NADPH + 2 H(+). It functions in the pathway metabolic intermediate biosynthesis; (R)-mevalonate biosynthesis; (R)-mevalonate from acetyl-CoA: step 3/3. Its function is as follows. This transmembrane glycoprotein is involved in the control of cholesterol biosynthesis. It is the rate-limiting enzyme of the sterol biosynthesis. In Dictyostelium discoideum (Social amoeba), this protein is 3-hydroxy-3-methylglutaryl-coenzyme A reductase 2 (hmgB).